Here is a 619-residue protein sequence, read N- to C-terminus: Dihydroxy-acid dehydratase (619 aa).

Aspartate 81 is a Mg(2+) binding site. Position 122 (cysteine 122) interacts with [2Fe-2S] cluster. 2 residues coordinate Mg(2+): aspartate 123 and lysine 124. N6-carboxylysine is present on lysine 124. Cysteine 195 contributes to the [2Fe-2S] cluster binding site. Glutamate 491 contacts Mg(2+). Serine 517 serves as the catalytic Proton acceptor.

It belongs to the IlvD/Edd family. In terms of assembly, homodimer. It depends on [2Fe-2S] cluster as a cofactor. Mg(2+) is required as a cofactor.

It catalyses the reaction (2R)-2,3-dihydroxy-3-methylbutanoate = 3-methyl-2-oxobutanoate + H2O. The enzyme catalyses (2R,3R)-2,3-dihydroxy-3-methylpentanoate = (S)-3-methyl-2-oxopentanoate + H2O. It participates in amino-acid biosynthesis; L-isoleucine biosynthesis; L-isoleucine from 2-oxobutanoate: step 3/4. It functions in the pathway amino-acid biosynthesis; L-valine biosynthesis; L-valine from pyruvate: step 3/4. Functionally, functions in the biosynthesis of branched-chain amino acids. Catalyzes the dehydration of (2R,3R)-2,3-dihydroxy-3-methylpentanoate (2,3-dihydroxy-3-methylvalerate) into 2-oxo-3-methylpentanoate (2-oxo-3-methylvalerate) and of (2R)-2,3-dihydroxy-3-methylbutanoate (2,3-dihydroxyisovalerate) into 2-oxo-3-methylbutanoate (2-oxoisovalerate), the penultimate precursor to L-isoleucine and L-valine, respectively. This chain is Dihydroxy-acid dehydratase, found in Sphingopyxis alaskensis (strain DSM 13593 / LMG 18877 / RB2256) (Sphingomonas alaskensis).